Reading from the N-terminus, the 336-residue chain is Ferredoxin--NADP reductase 1 (336 aa).

Glu-37, Lys-45, Phe-50, Val-90, Leu-125, Asp-287, and Thr-328 together coordinate FAD.

The protein belongs to the ferredoxin--NADP reductase type 2 family. Homodimer. It depends on FAD as a cofactor.

It catalyses the reaction 2 reduced [2Fe-2S]-[ferredoxin] + NADP(+) + H(+) = 2 oxidized [2Fe-2S]-[ferredoxin] + NADPH. The protein is Ferredoxin--NADP reductase 1 (ycgT) of Bacillus subtilis (strain 168).